Consider the following 259-residue polypeptide: MASEEASRNSRSRWEPEGRFPRQDKYSVLLPTYNERENLPLIVWLLVKSFSESGINYEIIIIDDGSPDGTRDIAEQLVKIYGSDKILLRPREKKLGLGTAYIHGMKHATGNYIIIMDADLSHHPKFIPEFIRKQKEGNFDIVSGTRYKGNGGVYGWDLKRKIISRGANFITQILLRPGASDLTGSFRLYRKEVLQKLIEKCVSKGYVFQMEMIVRARQLNYTIGEVPISFVDRVYGESKLGGNEIVSFLKGLLTLFATT.

Ala-2 is modified (N-acetylalanine). The residue at position 3 (Ser-3) is a Phosphoserine. 11 residues coordinate GDP-alpha-D-mannose: Pro-31, Tyr-33, Glu-35, Ile-62, Asp-64, Asp-117, Ala-118, Asp-119, Arg-146, Arg-233, and Lys-239. Mg(2+) is bound at residue Asp-119. Asp-119 serves as a coordination point for Mn(2+).

This sequence belongs to the glycosyltransferase 2 family. In terms of assembly, component of the dolichol-phosphate mannose (DPM) synthase complex composed of DPM1, DPM2 and DPM3; within the complex, directly interacts with DPM3. This interaction may stabilize DPM1. Mg(2+) serves as cofactor. The cofactor is Mn(2+). Requires Ca(2+) as cofactor.

It is found in the endoplasmic reticulum. It carries out the reaction a di-trans,poly-cis-dolichyl phosphate + GDP-alpha-D-mannose = a di-trans,poly-cis-dolichyl beta-D-mannosyl phosphate + GDP. Its pathway is protein modification; protein glycosylation. Functionally, transfers mannose from GDP-mannose to dolichol monophosphate to form dolichol phosphate mannose (Dol-P-Man) which is the mannosyl donor in pathways leading to N-glycosylation, glycosyl phosphatidylinositol membrane anchoring, and O-mannosylation of proteins; catalytic subunit of the dolichol-phosphate mannose (DPM) synthase complex. This is Dolichol-phosphate mannosyltransferase subunit 1 (DPM1) from Sus scrofa (Pig).